A 546-amino-acid polypeptide reads, in one-letter code: DDB1- and CUL4-associated factor 11 (546 aa).

The segment covering 1–19 has biased composition (low complexity); that stretch reads MGSRNSSSAGSGSGDPSEG. A disordered region spans residues 1–40; the sequence is MGSRNSSSAGSGSGDPSEGLPRRGAGLRRSEEEEEEDEDV. Phosphoserine is present on residues Leu49 and Ser75. WD repeat units lie at residues 170-210, 216-258, 263-302, 305-345, 353-392, 435-480, and 481-520; these read SYSQ…RKFK, DVGW…TALD, ERRF…RTLQ, SHED…EDDP, GHQD…SREG, GVLH…KKLT, and NHKA…YFQD. A disordered region spans residues 523 to 546; it reads PESEECASAPAPVPQSSTPFSSPQ. Residues 536-546 are compositionally biased toward polar residues; that stretch reads PQSSTPFSSPQ.

Interacts with DDB1 and CUL4A.

It participates in protein modification; protein ubiquitination. Functionally, may function as a substrate receptor for CUL4-DDB1 E3 ubiquitin-protein ligase complex. This chain is DDB1- and CUL4-associated factor 11 (DCAF11), found in Homo sapiens (Human).